A 266-amino-acid chain; its full sequence is Glucosamine-6-phosphate deaminase (266 aa).

The Proton acceptor; for enolization step role is filled by D72. Catalysis depends on D141, which acts as the For ring-opening step. Catalysis depends on H143, which acts as the Proton acceptor; for ring-opening step. E148 (for ring-opening step) is an active-site residue.

This sequence belongs to the glucosamine/galactosamine-6-phosphate isomerase family. NagB subfamily. As to quaternary structure, homohexamer; trimer of disulfide-linked dimers.

It catalyses the reaction alpha-D-glucosamine 6-phosphate + H2O = beta-D-fructose 6-phosphate + NH4(+). It participates in amino-sugar metabolism; N-acetylneuraminate degradation; D-fructose 6-phosphate from N-acetylneuraminate: step 5/5. With respect to regulation, allosterically activated by N-acetylglucosamine 6-phosphate (GlcNAc6P). In terms of biological role, catalyzes the reversible isomerization-deamination of glucosamine 6-phosphate (GlcN6P) to form fructose 6-phosphate (Fru6P) and ammonium ion. The chain is Glucosamine-6-phosphate deaminase from Shigella flexneri serotype 5b (strain 8401).